Consider the following 1176-residue polypeptide: Pesticidal crystal protein Cry1Aa (1176 aa).

It belongs to the delta endotoxin family.

Functionally, promotes colloidosmotic lysis by binding to the midgut epithelial cells of many lepidopteran larvae. This is Pesticidal crystal protein Cry1Aa (cry1Aa) from Bacillus thuringiensis subsp. entomocidus.